Here is a 319-residue protein sequence, read N- to C-terminus: Beta-ketoacyl-[acyl-carrier-protein] synthase III (319 aa).

Active-site residues include Cys-113 and His-246. Residues 247–251 are ACP-binding; that stretch reads QANRR. Asn-276 is a catalytic residue.

It belongs to the thiolase-like superfamily. FabH family. As to quaternary structure, homodimer.

It is found in the cytoplasm. The enzyme catalyses malonyl-[ACP] + acetyl-CoA + H(+) = 3-oxobutanoyl-[ACP] + CO2 + CoA. The protein operates within lipid metabolism; fatty acid biosynthesis. Catalyzes the condensation reaction of fatty acid synthesis by the addition to an acyl acceptor of two carbons from malonyl-ACP. Catalyzes the first condensation reaction which initiates fatty acid synthesis and may therefore play a role in governing the total rate of fatty acid production. Possesses both acetoacetyl-ACP synthase and acetyl transacylase activities. Its substrate specificity determines the biosynthesis of branched-chain and/or straight-chain of fatty acids. This chain is Beta-ketoacyl-[acyl-carrier-protein] synthase III, found in Rhizorhabdus wittichii (strain DSM 6014 / CCUG 31198 / JCM 15750 / NBRC 105917 / EY 4224 / RW1) (Sphingomonas wittichii).